A 274-amino-acid chain; its full sequence is Non-structural protein 4 (274 aa).

This sequence belongs to the aquareoviridae NS4 protein family.

The protein is Non-structural protein 4 (S7) of Notemigonus crysoleucas (Golden shiner).